Here is a 442-residue protein sequence, read N- to C-terminus: Ribosomal protein uS12 methylthiotransferase RimO (442 aa).

The region spanning 13-129 (RSIFLLSLGC…ILNILGTAYD (117 aa)) is the MTTase N-terminal domain. [4Fe-4S] cluster is bound by residues cysteine 22, cysteine 58, cysteine 92, cysteine 153, cysteine 157, and cysteine 160. The Radical SAM core domain occupies 139-369 (LSPSHYAWLK…MELQEGISEK (231 aa)). The 68-residue stretch at 372 to 439 (RALEEKALKV…AYELVGRIKN (68 aa)) folds into the TRAM domain.

Belongs to the methylthiotransferase family. RimO subfamily. [4Fe-4S] cluster is required as a cofactor.

It is found in the cytoplasm. The catalysed reaction is L-aspartate(89)-[ribosomal protein uS12]-hydrogen + (sulfur carrier)-SH + AH2 + 2 S-adenosyl-L-methionine = 3-methylsulfanyl-L-aspartate(89)-[ribosomal protein uS12]-hydrogen + (sulfur carrier)-H + 5'-deoxyadenosine + L-methionine + A + S-adenosyl-L-homocysteine + 2 H(+). In terms of biological role, catalyzes the methylthiolation of an aspartic acid residue of ribosomal protein uS12. In Chlorobium phaeobacteroides (strain BS1), this protein is Ribosomal protein uS12 methylthiotransferase RimO.